The sequence spans 594 residues: Elongation factor 4 (594 aa).

Residues 2–184 (KNIRNFSIIA…TIVAKVPAPE (183 aa)) enclose the tr-type G domain. GTP-binding positions include 14 to 19 (DHGKST) and 131 to 134 (NKID).

Belongs to the TRAFAC class translation factor GTPase superfamily. Classic translation factor GTPase family. LepA subfamily.

It is found in the cell inner membrane. The catalysed reaction is GTP + H2O = GDP + phosphate + H(+). In terms of biological role, required for accurate and efficient protein synthesis under certain stress conditions. May act as a fidelity factor of the translation reaction, by catalyzing a one-codon backward translocation of tRNAs on improperly translocated ribosomes. Back-translocation proceeds from a post-translocation (POST) complex to a pre-translocation (PRE) complex, thus giving elongation factor G a second chance to translocate the tRNAs correctly. Binds to ribosomes in a GTP-dependent manner. The sequence is that of Elongation factor 4 from Francisella tularensis subsp. tularensis (strain FSC 198).